The chain runs to 65 residues: Large ribosomal subunit protein bL35 (65 aa).

Over residues Met-1–Ser-15 the composition is skewed to basic residues. The disordered stretch occupies residues Met-1–Ser-21.

It belongs to the bacterial ribosomal protein bL35 family.

The protein is Large ribosomal subunit protein bL35 of Dechloromonas aromatica (strain RCB).